Reading from the N-terminus, the 725-residue chain is Methionine--tRNA ligase (725 aa).

The short motif at 27–37 (PYANGQIHIGH) is the 'HIGH' region element. 4 residues coordinate Zn(2+): Cys158, Cys161, Cys171, and Cys174. A 'KMSKS' region motif is present at residues 348-352 (KMSKS). Lys351 lines the ATP pocket. Positions 619–725 (DFAKIDLRIA…SGAKPGMRVK (107 aa)) constitute a tRNA-binding domain.

This sequence belongs to the class-I aminoacyl-tRNA synthetase family. MetG type 1 subfamily. In terms of assembly, homodimer. Requires Zn(2+) as cofactor.

It is found in the cytoplasm. It catalyses the reaction tRNA(Met) + L-methionine + ATP = L-methionyl-tRNA(Met) + AMP + diphosphate. In terms of biological role, is required not only for elongation of protein synthesis but also for the initiation of all mRNA translation through initiator tRNA(fMet) aminoacylation. This Burkholderia pseudomallei (strain 1106a) protein is Methionine--tRNA ligase.